Reading from the N-terminus, the 213-residue chain is Kynurenine formamidase (213 aa).

Trp18 contacts substrate. Zn(2+)-binding residues include His48, His52, and Asp54. His58 functions as the Proton donor/acceptor in the catalytic mechanism. Positions 160 and 172 each coordinate Zn(2+).

The protein belongs to the Cyclase 1 superfamily. KynB family. As to quaternary structure, homodimer. Zn(2+) is required as a cofactor.

The catalysed reaction is N-formyl-L-kynurenine + H2O = L-kynurenine + formate + H(+). It participates in amino-acid degradation; L-tryptophan degradation via kynurenine pathway; L-kynurenine from L-tryptophan: step 2/2. Functionally, catalyzes the hydrolysis of N-formyl-L-kynurenine to L-kynurenine, the second step in the kynurenine pathway of tryptophan degradation. The protein is Kynurenine formamidase of Burkholderia multivorans (strain ATCC 17616 / 249).